We begin with the raw amino-acid sequence, 596 residues long: Elongation factor 4 (596 aa).

One can recognise a tr-type G domain in the interval 2–183 (ENIRNFSIIA…AIIKRIPAPK (182 aa)). GTP is bound by residues 14 to 19 (DHGKST) and 130 to 133 (NKID).

It belongs to the TRAFAC class translation factor GTPase superfamily. Classic translation factor GTPase family. LepA subfamily.

The protein localises to the cell inner membrane. The enzyme catalyses GTP + H2O = GDP + phosphate + H(+). Its function is as follows. Required for accurate and efficient protein synthesis under certain stress conditions. May act as a fidelity factor of the translation reaction, by catalyzing a one-codon backward translocation of tRNAs on improperly translocated ribosomes. Back-translocation proceeds from a post-translocation (POST) complex to a pre-translocation (PRE) complex, thus giving elongation factor G a second chance to translocate the tRNAs correctly. Binds to ribosomes in a GTP-dependent manner. The sequence is that of Elongation factor 4 from Campylobacter hominis (strain ATCC BAA-381 / DSM 21671 / CCUG 45161 / LMG 19568 / NCTC 13146 / CH001A).